Consider the following 404-residue polypeptide: Formate-dependent phosphoribosylglycinamide formyltransferase (404 aa).

N(1)-(5-phospho-beta-D-ribosyl)glycinamide is bound by residues 25 to 26 and Glu-85; that span reads EL. ATP-binding positions include Arg-118, Lys-159, 164-169, 199-202, and Glu-207; these read SSGKGQ and EGFV. One can recognise an ATP-grasp domain in the interval 123–318; the sequence is RLAAEELGLP…EFELHARAIL (196 aa). Mg(2+) is bound by residues Glu-277 and Glu-289. N(1)-(5-phospho-beta-D-ribosyl)glycinamide is bound by residues Asp-296, Lys-365, and 372 to 373; that span reads RR.

Belongs to the PurK/PurT family. Homodimer.

It catalyses the reaction N(1)-(5-phospho-beta-D-ribosyl)glycinamide + formate + ATP = N(2)-formyl-N(1)-(5-phospho-beta-D-ribosyl)glycinamide + ADP + phosphate + H(+). It functions in the pathway purine metabolism; IMP biosynthesis via de novo pathway; N(2)-formyl-N(1)-(5-phospho-D-ribosyl)glycinamide from N(1)-(5-phospho-D-ribosyl)glycinamide (formate route): step 1/1. Involved in the de novo purine biosynthesis. Catalyzes the transfer of formate to 5-phospho-ribosyl-glycinamide (GAR), producing 5-phospho-ribosyl-N-formylglycinamide (FGAR). Formate is provided by PurU via hydrolysis of 10-formyl-tetrahydrofolate. This chain is Formate-dependent phosphoribosylglycinamide formyltransferase, found in Burkholderia thailandensis (strain ATCC 700388 / DSM 13276 / CCUG 48851 / CIP 106301 / E264).